A 424-amino-acid chain; its full sequence is Glutamate-1-semialdehyde 2,1-aminomutase (424 aa).

At lysine 260 the chain carries N6-(pyridoxal phosphate)lysine.

The protein belongs to the class-III pyridoxal-phosphate-dependent aminotransferase family. HemL subfamily. Pyridoxal 5'-phosphate is required as a cofactor.

It is found in the cytoplasm. The enzyme catalyses (S)-4-amino-5-oxopentanoate = 5-aminolevulinate. It functions in the pathway porphyrin-containing compound metabolism; protoporphyrin-IX biosynthesis; 5-aminolevulinate from L-glutamyl-tRNA(Glu): step 2/2. In Nitrosopumilus maritimus (strain SCM1), this protein is Glutamate-1-semialdehyde 2,1-aminomutase.